A 273-amino-acid chain; its full sequence is Ribosomal RNA small subunit methyltransferase I (273 aa).

It belongs to the methyltransferase superfamily. RsmI family.

Its subcellular location is the cytoplasm. The catalysed reaction is cytidine(1402) in 16S rRNA + S-adenosyl-L-methionine = 2'-O-methylcytidine(1402) in 16S rRNA + S-adenosyl-L-homocysteine + H(+). In terms of biological role, catalyzes the 2'-O-methylation of the ribose of cytidine 1402 (C1402) in 16S rRNA. The polypeptide is Ribosomal RNA small subunit methyltransferase I (Xylella fastidiosa (strain 9a5c)).